The following is a 360-amino-acid chain: Peptide chain release factor 1 (360 aa).

Gln235 is subject to N5-methylglutamine.

This sequence belongs to the prokaryotic/mitochondrial release factor family. In terms of processing, methylated by PrmC. Methylation increases the termination efficiency of RF1.

It is found in the cytoplasm. In terms of biological role, peptide chain release factor 1 directs the termination of translation in response to the peptide chain termination codons UAG and UAA. The sequence is that of Peptide chain release factor 1 from Delftia acidovorans (strain DSM 14801 / SPH-1).